The primary structure comprises 340 residues: GTP 3',8-cyclase (340 aa).

A Radical SAM core domain is found at 8–227 (KLGRPIRDLR…SMIQEEFDIE (220 aa)). Residue Arg-17 participates in GTP binding. Positions 24 and 28 each coordinate [4Fe-4S] cluster. Tyr-30 contacts S-adenosyl-L-methionine. Position 31 (Cys-31) interacts with [4Fe-4S] cluster. Position 71 (Arg-71) interacts with GTP. An S-adenosyl-L-methionine-binding site is contributed by Gly-75. Thr-102 contributes to the GTP binding site. Position 126 (Ser-126) interacts with S-adenosyl-L-methionine. Lys-163 is a binding site for GTP. Position 197 (Met-197) interacts with S-adenosyl-L-methionine. [4Fe-4S] cluster is bound by residues Cys-261 and Cys-264. 266-268 (RAR) serves as a coordination point for GTP. Cys-278 serves as a coordination point for [4Fe-4S] cluster.

It belongs to the radical SAM superfamily. MoaA family. Monomer and homodimer. It depends on [4Fe-4S] cluster as a cofactor.

The enzyme catalyses GTP + AH2 + S-adenosyl-L-methionine = (8S)-3',8-cyclo-7,8-dihydroguanosine 5'-triphosphate + 5'-deoxyadenosine + L-methionine + A + H(+). It functions in the pathway cofactor biosynthesis; molybdopterin biosynthesis. Functionally, catalyzes the cyclization of GTP to (8S)-3',8-cyclo-7,8-dihydroguanosine 5'-triphosphate. This chain is GTP 3',8-cyclase, found in Staphylococcus carnosus (strain TM300).